The chain runs to 797 residues: Complex I intermediate-associated protein 84, mitochondrial (797 aa).

The transit peptide at 1–69 (MRSHLARNAT…ALCTRTSKRT (69 aa)) directs the protein to the mitochondrion.

It is found in the mitochondrion. Chaperone protein involved in the assembly of the mitochondrial NADH:ubiquinone oxidoreductase complex (complex I). The protein is Complex I intermediate-associated protein 84, mitochondrial (cia84) of Neurospora crassa (strain ATCC 24698 / 74-OR23-1A / CBS 708.71 / DSM 1257 / FGSC 987).